The primary structure comprises 92 residues: Large ribosomal subunit protein eL31 (92 aa).

This sequence belongs to the eukaryotic ribosomal protein eL31 family.

This Pyrobaculum arsenaticum (strain DSM 13514 / JCM 11321 / PZ6) protein is Large ribosomal subunit protein eL31.